The following is a 162-amino-acid chain: Protein hcp1 (162 aa).

It belongs to the hcp1 family. As to quaternary structure, hexamer. Three hcp1 monomers form two closely related hexameric rings with a 40 Angstrom internal diameter.

It is found in the secreted. Its function is as follows. Required for assembly of the protein secretion apparatus HSI-I. Actively secreted during chronic infection of cystic fibrosis patients. In Pseudomonas aeruginosa (strain ATCC 15692 / DSM 22644 / CIP 104116 / JCM 14847 / LMG 12228 / 1C / PRS 101 / PAO1), this protein is Protein hcp1 (hcp1).